A 190-amino-acid polypeptide reads, in one-letter code: MLEKLKTSLINSPVIKRGEYNYFIHPISDGVPSIDPHMVEEIAEYILQITDIKKVDTILTIEAMGIPVANALSLKTGIPLTIVRKRPYFLEGEVELSQRTGYSKGALYINGLKKGDRVIIVDDVISTGGTLIALVKALKTIGVEIQDVISVIGRGTGYLQLKELGVEPKILVTIDVSEKGVEIKNVFGNE.

This sequence belongs to the purine/pyrimidine phosphoribosyltransferase family. Archaeal HPRT subfamily. In terms of assembly, homodimer.

Its subcellular location is the cytoplasm. It catalyses the reaction IMP + diphosphate = hypoxanthine + 5-phospho-alpha-D-ribose 1-diphosphate. The enzyme catalyses GMP + diphosphate = guanine + 5-phospho-alpha-D-ribose 1-diphosphate. It functions in the pathway purine metabolism; IMP biosynthesis via salvage pathway; IMP from hypoxanthine: step 1/1. Functionally, catalyzes a salvage reaction resulting in the formation of IMP that is energically less costly than de novo synthesis. The polypeptide is Hypoxanthine/guanine phosphoribosyltransferase (Methanosarcina barkeri (strain Fusaro / DSM 804)).